Here is a 256-residue protein sequence, read N- to C-terminus: Cell division protein ZipA (256 aa).

The Periplasmic segment spans residues 1–6; it reads MQYGRQ. A helical transmembrane segment spans residues 7 to 27; it reads ILICIGILTVIILLLYGLLNS. At 28–256 the chain is on the cytoplasmic side; sequence YWDRTVTFCK…RHVLSANKST (229 aa).

This sequence belongs to the ZipA family. Interacts with FtsZ via their C-terminal domains.

It localises to the cell inner membrane. Functionally, essential cell division protein that stabilizes the FtsZ protofilaments by cross-linking them and that serves as a cytoplasmic membrane anchor for the Z ring. Also required for the recruitment to the septal ring of downstream cell division proteins. The polypeptide is Cell division protein ZipA (Baumannia cicadellinicola subsp. Homalodisca coagulata).